The sequence spans 525 residues: MNDLKKSPLLILDFGSQYTQLIARRVREMGVYCEIYPYHINHEQFKKLNPCGVILSGGPSTVTHDANPRAPQWLFDSGLPLLGICYGMQTMAVQLGGQVHSSALREFGYAELRLHGHSQLLNNIEDRILADGSALLDVWMSHGDKVTELPPGFKIICETRNAPIAGMADESRQMYGLQFHPEVTHTLQGLRILQRFVVDICKASTDWTPEHIIDEAINKIREQVGTEKVLLGLSGGVDSSVVAALLHRAIGEQLVCVFVDTGLLRLNEAEQVLSMFGRHMGIRIIAVNAEDKFLTALKGVTCPEEKRKIIGRTFIEVFDEEAQKLTEIKWLAQGTIYPDVIESAATSTNDAAVVIKSHHNVGGLPDTLNLKLLEPIRELFKDEVRQVGLELGLPHDMVYRHPFPGPGLGVRILAEVKKEYADILRKADAIFIEELHNAQLYHKISQAFAVFLPVKSVGVMGDGRRYDYVICLRAVETVDFMTAHWSQLPWDFLGKVSNRIINEVEGVSRVTYDISGKPPATIEWE.

The Glutamine amidotransferase type-1 domain occupies 8–206 (PLLILDFGSQ…VVDICKASTD (199 aa)). Cys-85 acts as the Nucleophile in catalysis. Active-site residues include His-180 and Glu-182. The 194-residue stretch at 207–400 (WTPEHIIDEA…LGLPHDMVYR (194 aa)) folds into the GMPS ATP-PPase domain. Residue 234–240 (SGGVDSS) participates in ATP binding.

Homodimer.

The catalysed reaction is XMP + L-glutamine + ATP + H2O = GMP + L-glutamate + AMP + diphosphate + 2 H(+). The protein operates within purine metabolism; GMP biosynthesis; GMP from XMP (L-Gln route): step 1/1. Catalyzes the synthesis of GMP from XMP. This Legionella pneumophila subsp. pneumophila (strain Philadelphia 1 / ATCC 33152 / DSM 7513) protein is GMP synthase [glutamine-hydrolyzing].